The chain runs to 652 residues: DNA ligase (652 aa).

NAD(+) contacts are provided by residues 29-33, 78-79, and glutamate 107; these read DSEYD and SL. Catalysis depends on lysine 109, which acts as the N6-AMP-lysine intermediate. The NAD(+) site is built by arginine 130, glutamate 164, lysine 278, and lysine 302. Zn(2+)-binding residues include cysteine 395, cysteine 398, cysteine 413, and cysteine 418. Positions 577-652 constitute a BRCT domain; the sequence is VADAALSGLT…VRDEAWLESL (76 aa).

It belongs to the NAD-dependent DNA ligase family. LigA subfamily. Mg(2+) serves as cofactor. Requires Mn(2+) as cofactor.

The catalysed reaction is NAD(+) + (deoxyribonucleotide)n-3'-hydroxyl + 5'-phospho-(deoxyribonucleotide)m = (deoxyribonucleotide)n+m + AMP + beta-nicotinamide D-nucleotide.. Functionally, DNA ligase that catalyzes the formation of phosphodiester linkages between 5'-phosphoryl and 3'-hydroxyl groups in double-stranded DNA using NAD as a coenzyme and as the energy source for the reaction. It is essential for DNA replication and repair of damaged DNA. The chain is DNA ligase from Streptococcus pneumoniae serotype 2 (strain D39 / NCTC 7466).